The chain runs to 423 residues: Glutamate-1-semialdehyde 2,1-aminomutase (423 aa).

K266 is modified (N6-(pyridoxal phosphate)lysine).

This sequence belongs to the class-III pyridoxal-phosphate-dependent aminotransferase family. HemL subfamily. As to quaternary structure, homodimer. Requires pyridoxal 5'-phosphate as cofactor.

It localises to the cytoplasm. It catalyses the reaction (S)-4-amino-5-oxopentanoate = 5-aminolevulinate. The protein operates within porphyrin-containing compound metabolism; protoporphyrin-IX biosynthesis; 5-aminolevulinate from L-glutamyl-tRNA(Glu): step 2/2. This Nitratidesulfovibrio vulgaris (strain DP4) (Desulfovibrio vulgaris) protein is Glutamate-1-semialdehyde 2,1-aminomutase.